Reading from the N-terminus, the 2178-residue chain is Genome polyprotein (2178 aa).

The tract at residues 1-20 is disordered; that stretch reads MGAQVSTQKSGSHENQNILT. The N-myristoyl glycine; by host moiety is linked to residue Gly-2. The Cytoplasmic segment spans residues 2-1490; it reads GAQVSTQKSG…AVNQASMIIN (1489 aa). Residues 564–584 are amphipathic alpha-helix; the sequence is ALTEGLSDELEEVIVEKTKQT. Catalysis depends on for protease 2A activity residues His-875 and Asp-893. Zn(2+)-binding residues include Cys-910 and Cys-912. The active-site For protease 2A activity is the Cys-964. Residues Cys-970 and His-972 each contribute to the Zn(2+) site. The membrane-binding stretch occupies residues 1100–1172; it reads NDGWFRKFND…HDSNPTQEKR (73 aa). An oligomerization region spans residues 1100–1238; the sequence is NDGWFRKFND…TPGSGKSLTT (139 aa). The segment at 1121–1125 is RNA-binding; it reads ANKIS. The SF3 helicase domain occupies 1204-1360; that stretch reads KNKITNYMQF…STYTKNGKLN (157 aa). Zn(2+) is bound by residues Cys-1368, Cys-1371, Cys-1380, and Cys-1385. Residues 1368-1385 form a C4-type zinc finger; the sequence is CKDCHQPSNFKKCCPLVC. An RNA-binding region spans residues 1412–1419; sequence DYKNKVKI. The segment at 1423–1428 is oligomerization; it reads LEVLFQ. An intramembrane segment occupies 1491-1506; sequence TILMFVSTLGIVYVIY. Over 1507–2178 the chain is Cytoplasmic; the sequence is KLFAQTQGPY…VLRRRWLDLF (672 aa). Position 1516 is an O-(5'-phospho-RNA)-tyrosine (Tyr-1516). In terms of domain architecture, Peptidase C3 spans 1537–1714; the sequence is GPNTEFALSL…FSAQLKKQYF (178 aa). Catalysis depends on for protease 3C activity residues His-1576, Glu-1607, and Cys-1682. One can recognise a RdRp catalytic domain in the interval 1946-2059; sequence HLMAFDYSNF…SYPFELDSNI (114 aa). Mg(2+)-binding residues include Asp-1951 and Asp-2045.

Belongs to the picornaviruses polyprotein family. As to quaternary structure, interacts with capsid protein VP1 and capsid protein VP3 to form heterotrimeric protomers. Interacts with capsid protein VP0, and capsid protein VP3 to form heterotrimeric protomers. Five protomers subsequently associate to form pentamers which serve as building blocks for the capsid. Interacts with capsid protein VP2, capsid protein VP3 and capsid protein VP4 following cleavage of capsid protein VP0. In terms of assembly, interacts with capsid protein VP1 and capsid protein VP3 in the mature capsid. As to quaternary structure, interacts with capsid protein VP0 and capsid protein VP1 to form heterotrimeric protomers. Five protomers subsequently associate to form pentamers which serve as building blocks for the capsid. Interacts with capsid protein VP4 in the mature capsid. Interacts with protein 2C; this interaction may be important for virion morphogenesis. Interacts with capsid protein VP1 and capsid protein VP3. In terms of assembly, homodimer. As to quaternary structure, homohexamer; forms a hexameric ring structure with 6-fold symmetry characteristic of AAA+ ATPases. Interacts (via N-terminus) with host RTN3 (via reticulon domain); this interaction is important for viral replication. Interacts with capsid protein VP3; this interaction may be important for virion morphogenesis. Interacts with protein 3CD. In terms of assembly, homodimer. Interacts with host GBF1. Interacts (via GOLD domain) with host ACBD3 (via GOLD domain); this interaction allows the formation of a viral protein 3A/ACBD3 heterotetramer with a 2:2 stoichiometry, which will stimulate the recruitment of host PI4KB in order to synthesize PI4P at the viral RNA replication sites. As to quaternary structure, interacts with RNA-directed RNA polymerase. Interacts with protein 3AB and with RNA-directed RNA polymerase. In terms of assembly, interacts with Viral protein genome-linked and with protein 3CD. Requires Mg(2+) as cofactor. Specific enzymatic cleavages in vivo by the viral proteases yield processing intermediates and the mature proteins. Post-translationally, myristoylation is required for the formation of pentamers during virus assembly. Further assembly of 12 pentamers and a molecule of genomic RNA generates the provirion. In terms of processing, during virion maturation, immature virions are rendered infectious following cleavage of VP0 into VP4 and VP2. This maturation seems to be an autocatalytic event triggered by the presence of RNA in the capsid and it is followed by a conformational change infectious virion. Myristoylation is required during RNA encapsidation and formation of the mature virus particle. Post-translationally, VPg is uridylylated by the polymerase into VPg-pUpU. This acts as a nucleotide-peptide primer for the genomic RNA replication.

It localises to the virion. Its subcellular location is the host cytoplasm. The protein localises to the host cytoplasmic vesicle membrane. The protein resides in the host nucleus. The enzyme catalyses a ribonucleoside 5'-triphosphate + H2O = a ribonucleoside 5'-diphosphate + phosphate + H(+). The catalysed reaction is Selective cleavage of Tyr-|-Gly bond in the picornavirus polyprotein.. It catalyses the reaction RNA(n) + a ribonucleoside 5'-triphosphate = RNA(n+1) + diphosphate. It carries out the reaction Selective cleavage of Gln-|-Gly bond in the poliovirus polyprotein. In other picornavirus reactions Glu may be substituted for Gln, and Ser or Thr for Gly.. Replication or transcription is subject to high level of random mutations by the nucleotide analog ribavirin. Functionally, forms an icosahedral capsid of pseudo T=3 symmetry with capsid proteins VP2 and VP3. The capsid is 300 Angstroms in diameter, composed of 60 copies of each capsid protein and enclosing the viral positive strand RNA genome. Capsid protein VP1 mainly forms the vertices of the capsid. Capsid protein VP1 interacts with host cell receptor to provide virion attachment to target host cells. This attachment induces virion internalization. Tyrosine kinases are probably involved in the entry process. After binding to its receptor, the capsid undergoes conformational changes. Capsid protein VP1 N-terminus (that contains an amphipathic alpha-helix) and capsid protein VP4 are externalized. Together, they shape a pore in the host membrane through which viral genome is translocated to host cell cytoplasm. Forms an icosahedral capsid of pseudo T=3 symmetry with capsid proteins VP2 and VP3. The capsid is 300 Angstroms in diameter, composed of 60 copies of each capsid protein and enclosing the viral positive strand RNA genome. In terms of biological role, lies on the inner surface of the capsid shell. After binding to the host receptor, the capsid undergoes conformational changes. Capsid protein VP4 is released, Capsid protein VP1 N-terminus is externalized, and together, they shape a pore in the host membrane through which the viral genome is translocated into the host cell cytoplasm. Its function is as follows. Component of immature procapsids, which is cleaved into capsid proteins VP4 and VP2 after maturation. Allows the capsid to remain inactive before the maturation step. Functionally, cysteine protease that cleaves viral polyprotein and specific host proteins. It is responsible for the autocatalytic cleavage between the P1 and P2 regions, which is the first cleavage occurring in the polyprotein. Also cleaves the host translation initiation factor EIF4G1, in order to shut down the capped cellular mRNA translation. Inhibits the host nucleus-cytoplasm protein and RNA trafficking by cleaving host members of the nuclear pores. Counteracts stress granule formation probably by antagonizing its assembly or promoting its dissassembly. Plays an essential role in the virus replication cycle by acting as a viroporin. Creates a pore in the host endoplasmic reticulum and as a consequence releases Ca2+ in the cytoplasm of infected cell. In turn, high levels of cytoplasmic calcium may trigger membrane trafficking and transport of viral ER-associated proteins to viroplasms, sites of viral genome replication. In terms of biological role, induces and associates with structural rearrangements of intracellular membranes. Displays RNA-binding, nucleotide binding and NTPase activities. May play a role in virion morphogenesis and viral RNA encapsidation by interacting with the capsid protein VP3. Its function is as follows. Localizes the viral replication complex to the surface of membranous vesicles. Together with protein 3CD binds the Cis-Active RNA Element (CRE) which is involved in RNA synthesis initiation. Acts as a cofactor to stimulate the activity of 3D polymerase, maybe through a nucleid acid chaperone activity. Functionally, localizes the viral replication complex to the surface of membranous vesicles. It inhibits host cell endoplasmic reticulum-to-Golgi apparatus transport and causes the disassembly of the Golgi complex, possibly through GBF1 interaction. This would result in depletion of MHC, trail receptors and IFN receptors at the host cell surface. Plays an essential role in viral RNA replication by recruiting ACBD3 and PI4KB at the viral replication sites, thereby allowing the formation of the rearranged membranous structures where viral replication takes place. Acts as a primer for viral RNA replication and remains covalently bound to viral genomic RNA. VPg is uridylylated prior to priming replication into VPg-pUpU. The oriI viral genomic sequence may act as a template for this. The VPg-pUpU is then used as primer on the genomic RNA poly(A) by the RNA-dependent RNA polymerase to replicate the viral genome. During genome replication, the VPg-RNA linkage is removed by the host TDP2, thereby accelerating replication. During the late stage of the replication cycle, host TDP2 is excluded from sites of viral RNA synthesis and encapsidation, allowing for the generation of progeny virions. In terms of biological role, involved in the viral replication complex and viral polypeptide maturation. It exhibits protease activity with a specificity and catalytic efficiency that is different from protease 3C. Protein 3CD lacks polymerase activity. Protein 3CD binds to the 5'UTR of the viral genome. Its function is as follows. Replicates the viral genomic RNA on the surface of intracellular membranes. May form linear arrays of subunits that propagate along a strong head-to-tail interaction called interface-I. Covalently attaches UMP to a tyrosine of VPg, which is used to prime RNA synthesis. The positive stranded RNA genome is first replicated at virus induced membranous vesicles, creating a dsRNA genomic replication form. This dsRNA is then used as template to synthesize positive stranded RNA genomes. ss(+)RNA genomes are either translated, replicated or encapsidated. Functionally, major viral protease that mediates proteolytic processing of the polyprotein. Cleaves host EIF5B, contributing to host translation shutoff. Also cleaves host PABPC1, contributing to host translation shutoff. Cleaves host NLRP1, triggers host N-glycine-mediated degradation of the autoinhibitory NLRP1 N-terminal fragment. In Homo sapiens (Human), this protein is Genome polyprotein.